The primary structure comprises 410 residues: Interleukin-1 receptor type 2 (410 aa).

The signal sequence occupies residues 1–13; it reads MFILLVLVTGVSA. Residues 14 to 355 lie on the Extracellular side of the membrane; the sequence is FTTPTVVHTG…SQSLHTTVKE (342 aa). 3 Ig-like C2-type domains span residues 35-136, 146-237, and 249-357; these read PTVH…VELK, PHVS…RNIE, and PVII…KEVS. 3 disulfides stabilise this stretch: Cys-42/Cys-128, Cys-64/Cys-120, and Cys-164/Cys-219. N-linked (GlcNAc...) asparagine glycans are attached at residues Asn-124, Asn-208, Asn-231, and Asn-289. Cysteines 270 and 338 form a disulfide. Residues 356-381 form a helical membrane-spanning segment; it reads VSSTFSWSIALAPLSLIILVVGAIWM. Over 382 to 410 the chain is Cytoplasmic; it reads RRRCKRRAGKTYGLTKLRTDNQDFPSSPN.

This sequence belongs to the interleukin-1 receptor family. Associates with IL1RAP to form a non-signaling interleukin-1 receptor complex. A soluble form (sIL1R2) can also be produced by proteolytic cleavage at the cell surface (shedding) involving a metalloproteinase. In terms of tissue distribution, strongly expressed in B-cells, with levels 21 times higher than IL1R1. In T-cells expressed 5 times more compared with IL1R1.

Its subcellular location is the membrane. The protein localises to the cell membrane. The protein resides in the secreted. In terms of biological role, non-signaling receptor for IL1A, IL1B and IL1RN. Reduces IL1B activities. Serves as a decoy receptor by competitive binding to IL1B and preventing its binding to IL1R1. Also modulates cellular response through non-signaling association with IL1RAP after binding to IL1B. IL1R2 (membrane and secreted forms) preferentially binds IL1B and poorly IL1A and IL1RN. The secreted IL1R2 recruits secreted IL1RAP with high affinity; this complex formation may be the dominant mechanism for neutralization of IL1B by secreted/soluble receptors. This is Interleukin-1 receptor type 2 (Il1r2) from Mus musculus (Mouse).